Reading from the N-terminus, the 133-residue chain is Small ribosomal subunit protein uS19 (133 aa).

The protein belongs to the universal ribosomal protein uS19 family.

Protein S19 forms a complex with S13 that binds strongly to the 16S ribosomal RNA. The polypeptide is Small ribosomal subunit protein uS19 (rps19) (Archaeoglobus fulgidus (strain ATCC 49558 / DSM 4304 / JCM 9628 / NBRC 100126 / VC-16)).